The following is a 228-amino-acid chain: Uracil-DNA glycosylase (228 aa).

Catalysis depends on D64, which acts as the Proton acceptor.

It belongs to the uracil-DNA glycosylase (UDG) superfamily. UNG family.

It is found in the cytoplasm. It carries out the reaction Hydrolyzes single-stranded DNA or mismatched double-stranded DNA and polynucleotides, releasing free uracil.. Excises uracil residues from the DNA which can arise as a result of misincorporation of dUMP residues by DNA polymerase or due to deamination of cytosine. In Pectobacterium carotovorum subsp. carotovorum (strain PC1), this protein is Uracil-DNA glycosylase.